The primary structure comprises 427 residues: UPF0229 protein YeaH (427 aa).

Over residues Asn79 to Arg90 the composition is skewed to basic and acidic residues. The tract at residues Asn79–Glu110 is disordered. A compositionally biased stretch (gly residues) spans Gln92–Gln102.

This sequence belongs to the UPF0229 family.

This Escherichia coli O9:H4 (strain HS) protein is UPF0229 protein YeaH.